The chain runs to 247 residues: Carboxy-S-adenosyl-L-methionine synthase (247 aa).

Residues Tyr39, 64–66 (GCS), 89–90 (DN), 117–118 (DI), Asn132, and Arg199 each bind S-adenosyl-L-methionine.

Belongs to the class I-like SAM-binding methyltransferase superfamily. Cx-SAM synthase family. In terms of assembly, homodimer.

It carries out the reaction prephenate + S-adenosyl-L-methionine = carboxy-S-adenosyl-L-methionine + 3-phenylpyruvate + H2O. Its function is as follows. Catalyzes the conversion of S-adenosyl-L-methionine (SAM) to carboxy-S-adenosyl-L-methionine (Cx-SAM). The polypeptide is Carboxy-S-adenosyl-L-methionine synthase (Shigella boydii serotype 4 (strain Sb227)).